The primary structure comprises 238 residues: tRNA1(Val) (adenine(37)-N6)-methyltransferase (238 aa).

The protein belongs to the methyltransferase superfamily. tRNA (adenine-N(6)-)-methyltransferase family.

The protein resides in the cytoplasm. The enzyme catalyses adenosine(37) in tRNA1(Val) + S-adenosyl-L-methionine = N(6)-methyladenosine(37) in tRNA1(Val) + S-adenosyl-L-homocysteine + H(+). Specifically methylates the adenine in position 37 of tRNA(1)(Val) (anticodon cmo5UAC). The chain is tRNA1(Val) (adenine(37)-N6)-methyltransferase from Shewanella baltica (strain OS185).